Reading from the N-terminus, the 245-residue chain is 1-(5-phosphoribosyl)-5-[(5-phosphoribosylamino)methylideneamino] imidazole-4-carboxamide isomerase (245 aa).

Asp-7 acts as the Proton acceptor in catalysis. Asp-129 serves as the catalytic Proton donor.

It belongs to the HisA/HisF family.

The protein resides in the cytoplasm. The catalysed reaction is 1-(5-phospho-beta-D-ribosyl)-5-[(5-phospho-beta-D-ribosylamino)methylideneamino]imidazole-4-carboxamide = 5-[(5-phospho-1-deoxy-D-ribulos-1-ylimino)methylamino]-1-(5-phospho-beta-D-ribosyl)imidazole-4-carboxamide. Its pathway is amino-acid biosynthesis; L-histidine biosynthesis; L-histidine from 5-phospho-alpha-D-ribose 1-diphosphate: step 4/9. The sequence is that of 1-(5-phosphoribosyl)-5-[(5-phosphoribosylamino)methylideneamino] imidazole-4-carboxamide isomerase from Tolumonas auensis (strain DSM 9187 / NBRC 110442 / TA 4).